Reading from the N-terminus, the 153-residue chain is Nucleoside diphosphate kinase (153 aa).

The ATP site is built by lysine 13, phenylalanine 61, arginine 89, threonine 95, arginine 106, and asparagine 116. Threonine 95 carries the phosphothreonine modification. The Pros-phosphohistidine intermediate role is filled by histidine 119.

This sequence belongs to the NDK family. As to quaternary structure, homohexamer and homotetramer. Interacts with TOM40 preferentially in an unfolded, unphosphorylated form. It depends on Mg(2+) as a cofactor. The N-terminus is blocked.

It is found in the cytoplasm. It localises to the mitochondrion intermembrane space. It carries out the reaction a 2'-deoxyribonucleoside 5'-diphosphate + ATP = a 2'-deoxyribonucleoside 5'-triphosphate + ADP. The catalysed reaction is a ribonucleoside 5'-diphosphate + ATP = a ribonucleoside 5'-triphosphate + ADP. In terms of biological role, major role in the synthesis of nucleoside triphosphates other than ATP. The ATP gamma phosphate is transferred to the NDP beta phosphate via a ping-pong mechanism, using a phosphorylated active-site intermediate. Required for repair of UV radiation- and etoposide-induced DNA damage. The sequence is that of Nucleoside diphosphate kinase (YNK1) from Saccharomyces cerevisiae (strain ATCC 204508 / S288c) (Baker's yeast).